Reading from the N-terminus, the 403-residue chain is Leu/Ile/Val-binding protein homolog 8 (403 aa).

The N-terminal stretch at 1-26 (MRLSRLLIGASLGVALSSTAFTAALA) is a signal peptide.

The protein belongs to the leucine-binding protein family.

Functionally, component of an amino-acid transport system. This chain is Leu/Ile/Val-binding protein homolog 8, found in Brucella suis biovar 1 (strain 1330).